Reading from the N-terminus, the 807-residue chain is Putative transmembrane protein ORF807 (807 aa).

The next 5 membrane-spanning stretches (helical) occupy residues 210–230, 234–254, 270–290, 459–479, and 657–677; these read VLMLICLLIYAGCYASYSDIL, GLSTVGAGVNAKVPVTAIVYF, VTIQLYALIWVGISTTNFVIL, ILIGVGAVALIVIGTVALVLT, and VALLSAIASILVNMFLFMPLV.

The protein localises to the host membrane. This Acidianus filamentous virus 1 (isolate United States/Yellowstone) (AFV-1) protein is Putative transmembrane protein ORF807.